Consider the following 1610-residue polypeptide: Voltage-dependent L-type calcium channel subunit alpha-1D (1610 aa).

Positions M1–S99 are disordered. Residues M1–K125 are Cytoplasmic-facing. The span at G37 to S51 shows a compositional bias: polar residues. Over residues Q53 to Q66 the composition is skewed to low complexity. Residues Q81–K92 are compositionally biased toward basic residues. The I repeat unit spans residues N112–F408. Residues P126–I144 traverse the membrane as a helical segment. Topologically, residues Y145–K162 are extracellular. Residue N154 is glycosylated (N-linked (GlcNAc...) asparagine). The helical transmembrane segment at V163–Y182 threads the bilayer. At G183–N194 the chain is on the cytoplasmic side. A helical transmembrane segment spans residues G195–L213. The Extracellular segment spans residues E214–D234. An N-linked (GlcNAc...) asparagine glycan is attached at N224. A helical membrane pass occupies residues V235–V253. At P254–H272 the chain is on the cytoplasmic side. A helical membrane pass occupies residues I273–F292. Residues I293–L380 are Extracellular-facing. An N-linked (GlcNAc...) asparagine glycan is attached at N328. E363 is a Ca(2+) binding site. A helical membrane pass occupies residues P381–S405. Over G406–V522 the chain is Cytoplasmic. The interval E428–E445 is binding to the beta subunit. Residues D448 to S487 are disordered. The segment covering N462–S487 has biased composition (polar residues). The stretch at N508–L754 is one II repeat. A helical membrane pass occupies residues T523 to E542. The Extracellular portion of the chain corresponds to H543–A557. The chain crosses the membrane as a helical span at residues N558 to L576. Residues G577–S584 are Cytoplasmic-facing. The chain crosses the membrane as a helical span at residues L585–L603. Over V604 to G613 the chain is Extracellular. A helical transmembrane segment spans residues V614–W632. The Cytoplasmic segment spans residues T633 to S651. The chain crosses the membrane as a helical span at residues L652–G672. The Extracellular segment spans residues G673–I726. Residue E704 participates in Ca(2+) binding. Residues V727–V751 traverse the membrane as a helical segment. The Cytoplasmic segment spans residues D752–H884. A compositionally biased stretch (basic and acidic residues) spans K765 to K789. Residues K765–I846 are disordered. A compositionally biased stretch (polar residues) spans P790–K801. Acidic residues predominate over residues V824–E836. One copy of the III repeat lies at N871–F1153. A helical membrane pass occupies residues I885 to A903. Topologically, residues E904–Y919 are extracellular. Residues F920–F939 form a helical membrane-spanning segment. Over G940–N951 the chain is Cytoplasmic. A helical transmembrane segment spans residues Y952–I970. The Extracellular segment spans residues Q971–S976. A helical transmembrane segment spans residues V977 to A996. The Cytoplasmic portion of the chain corresponds to K997–N1015. The helical transmembrane segment at I1016–F1035 threads the bilayer. The Extracellular portion of the chain corresponds to K1036–E1125. The dihydropyridine binding stretch occupies residues R1073–N1163. E1099 serves as a coordination point for Ca(2+). Residues I1126 to V1146 traverse the membrane as a helical segment. Residues G1147 to S1203 lie on the Cytoplasmic side of the membrane. An IV repeat occupies N1190–F1465. Residues P1204 to M1222 traverse the membrane as a helical segment. Topologically, residues Q1223–I1237 are extracellular. A helical membrane pass occupies residues L1238–F1257. Residues K1258 to S1264 are Cytoplasmic-facing. A helical membrane pass occupies residues D1265–E1286. The Extracellular portion of the chain corresponds to A1287–I1311. Residues S1312–G1331 traverse the membrane as a helical segment. Topologically, residues E1332–Y1350 are cytoplasmic. Residues V1351–F1370 traverse the membrane as a helical segment. Topologically, residues G1371–F1437 are extracellular. The segment at L1418–K1484 is dihydropyridine binding. Residues E1430–S1473 are phenylalkylamine binding. Residues A1438–M1462 form a helical membrane-spanning segment. The Cytoplasmic segment spans residues D1463 to S1610.

The protein belongs to the calcium channel alpha-1 subunit (TC 1.A.1.11) family. CACNA1D subfamily. In terms of assembly, voltage-dependent calcium channels are multisubunit complexes, consisting of alpha-1, alpha-2, beta and delta subunits in a 1:1:1:1 ratio. The channel activity is directed by the pore-forming and voltage-sensitive alpha-1 subunit. In many cases, this subunit is sufficient to generate voltage-sensitive calcium channel activity. The auxiliary subunits beta and alpha-2/delta linked by a disulfide bridge regulate the channel activity. Interacts with RIMBP2. Interacts with CABP1 and CABP4, resulting in a near elimination of calcium-dependent inactivation of the channel. Expressed in brain, heart and skeletal muscle.

The protein localises to the membrane. It carries out the reaction Ca(2+)(in) = Ca(2+)(out). Its function is as follows. Voltage-sensitive calcium channels (VSCC) mediate the entry of calcium ions into excitable cells and are also involved in a variety of calcium-dependent processes, including muscle contraction, hormone or neurotransmitter release, gene expression, cell motility, cell division and cell death. The isoform alpha-1D gives rise to L-type calcium currents. Long-lasting (L-type) calcium channels belong to the 'high-voltage activated' (HVA) group. They are blocked by dihydropyridines (DHP), phenylalkylamines, and by benzothiazepines. The sequence is that of Voltage-dependent L-type calcium channel subunit alpha-1D (CACNA1D) from Mesocricetus auratus (Golden hamster).